A 352-amino-acid polypeptide reads, in one-letter code: Photosystem II protein D1 (352 aa).

Thr2 carries the post-translational modification N-acetylthreonine. Residue Thr2 is modified to Phosphothreonine. 3 consecutive transmembrane segments (helical) span residues 29 to 46 (YIGWFGVLMIPTLLTATS), 118 to 133 (HFFLGICCYMGREWEL), and 142 to 156 (WIAVAYSAPVAAATA). Residue His118 coordinates chlorophyll a. Tyr126 provides a ligand contact to pheophytin a. 2 residues coordinate [CaMn4O5] cluster: Asp170 and Glu189. Residues 197 to 218 (FHMLGVAGVFGGSLFSAMHGSL) traverse the membrane as a helical segment. Residue His198 participates in chlorophyll a binding. A quinone is bound by residues His215 and 264–265 (SF). His215 contacts Fe cation. His272 provides a ligand contact to Fe cation. The chain crosses the membrane as a helical span at residues 274–288 (FLAAWPVVGIWFTAL). Residues His332, Glu333, Asp342, and Ala344 each coordinate [CaMn4O5] cluster. Positions 345 to 352 (SVEAPSIA) are excised as a propeptide.

Belongs to the reaction center PufL/M/PsbA/D family. As to quaternary structure, PSII is composed of 1 copy each of membrane proteins PsbA, PsbB, PsbC, PsbD, PsbE, PsbF, PsbH, PsbI, PsbJ, PsbK, PsbL, PsbM, PsbT, PsbX, PsbY, PsbZ, Psb30/Ycf12, at least 3 peripheral proteins of the oxygen-evolving complex and a large number of cofactors. It forms dimeric complexes. The D1/D2 heterodimer binds P680, chlorophylls that are the primary electron donor of PSII, and subsequent electron acceptors. It shares a non-heme iron and each subunit binds pheophytin, quinone, additional chlorophylls, carotenoids and lipids. D1 provides most of the ligands for the Mn4-Ca-O5 cluster of the oxygen-evolving complex (OEC). There is also a Cl(-1) ion associated with D1 and D2, which is required for oxygen evolution. The PSII complex binds additional chlorophylls, carotenoids and specific lipids. is required as a cofactor. Post-translationally, tyr-161 forms a radical intermediate that is referred to as redox-active TyrZ, YZ or Y-Z. In terms of processing, C-terminally processed by CTPA; processing is essential to allow assembly of the oxygen-evolving complex and thus photosynthetic growth.

It is found in the plastid. The protein resides in the chloroplast thylakoid membrane. The enzyme catalyses 2 a plastoquinone + 4 hnu + 2 H2O = 2 a plastoquinol + O2. Its function is as follows. Photosystem II (PSII) is a light-driven water:plastoquinone oxidoreductase that uses light energy to abstract electrons from H(2)O, generating O(2) and a proton gradient subsequently used for ATP formation. It consists of a core antenna complex that captures photons, and an electron transfer chain that converts photonic excitation into a charge separation. The D1/D2 (PsbA/PsbD) reaction center heterodimer binds P680, the primary electron donor of PSII as well as several subsequent electron acceptors. The protein is Photosystem II protein D1 of Chlorella ellipsoidea.